The following is a 310-amino-acid chain: Prohibitin-2 (310 aa).

The helical; Signal-anchor for type II membrane protein transmembrane segment at 38-58 threads the bilayer; it reads FAGLGGLLLLGGGALFINNAL. Residues 130–144 are interaction with ATG8; that stretch reads DVVQLPTIYRTLGQD. Residues 138–141 carry the AIM motif; sequence YRTL. The stretch at 212–253 forms a coiled coil; the sequence is NAVEAKQIAQQDAQRAAFVVDKARQEKQGMVVRAQGEAKSAE.

It belongs to the prohibitin family. The mitochondrial prohibitin complex consists of two subunits (PHB1 and PHB2). The subunits assemble into a membrane-associated ring-shaped supercomplex of approximately 1 mDa. The mitochondrial prohibitin complex interacts with the m-AAA protease, a heterohexamer composed of YTA12/RCA1 and YTA10/AFG3. The mitochondrial prohibitin complex interacts with ATG8 and the interaction may support mitophagosome assembly. The N-terminus is blocked.

The protein localises to the mitochondrion inner membrane. Its function is as follows. Prohibitin probably acts as a holdase/unfoldase for the stabilization of newly synthesized mitochondrial proteins. Involved in mitophagy; may act as an adapter for ATG8 that supports mitophagosome assembly. Negatively regulates the proteolytic processing of ATG32 via the i-AAA protease. Acts as a negative regulator of the m-AAA protease. The chain is Prohibitin-2 (PHB2) from Saccharomyces cerevisiae (strain ATCC 204508 / S288c) (Baker's yeast).